A 72-amino-acid polypeptide reads, in one-letter code: Translation initiation factor IF-1 (72 aa).

One can recognise an S1-like domain in the interval 1-72; the sequence is MAKEEAIEIE…TKGRITYRYK (72 aa).

This sequence belongs to the IF-1 family. In terms of assembly, component of the 30S ribosomal translation pre-initiation complex which assembles on the 30S ribosome in the order IF-2 and IF-3, IF-1 and N-formylmethionyl-tRNA(fMet); mRNA recruitment can occur at any time during PIC assembly.

Its subcellular location is the cytoplasm. One of the essential components for the initiation of protein synthesis. Stabilizes the binding of IF-2 and IF-3 on the 30S subunit to which N-formylmethionyl-tRNA(fMet) subsequently binds. Helps modulate mRNA selection, yielding the 30S pre-initiation complex (PIC). Upon addition of the 50S ribosomal subunit IF-1, IF-2 and IF-3 are released leaving the mature 70S translation initiation complex. The polypeptide is Translation initiation factor IF-1 (Chlorobium phaeobacteroides (strain DSM 266 / SMG 266 / 2430)).